We begin with the raw amino-acid sequence, 278 residues long: Asnovolin E/Chermesin D methyltransferase nvfJ (278 aa).

S-adenosyl-L-methionine contacts are provided by residues 125–126, 152–153, and 153–154; these read DL, NI, and IL.

This sequence belongs to the class I-like SAM-binding methyltransferase superfamily. As to quaternary structure, homodimer.

The enzyme catalyses chermesin D + S-adenosyl-L-methionine = chermesin D methyl ester + S-adenosyl-L-homocysteine. The catalysed reaction is asnovolin I + S-adenosyl-L-methionine = asnovolin K + S-adenosyl-L-homocysteine. It functions in the pathway secondary metabolite biosynthesis; terpenoid biosynthesis. Functionally, methyltransferase; part of the gene cluster that mediates the biosynthesis of novofumigatonin, a heavily oxygenated meroterpenoid containing a unique orthoester moiety. The first step of the pathway is the synthesis of 3,5-dimethylorsellinic acid (DMOA) by the polyketide synthase nvfA via condensation of one acetyl-CoA starter unit with 3 malonyl-CoA units and 2 methylations. DMOA is then converted to farnesyl-DMOA by the farnesyltransferase nvfB. Epoxydation by FAD-dependent monooxygenase nvfK, followed by a protonation-initiated cyclization catalyzed by the terpene cyclase nvfL leads to the production of asnavolin H. The short chain dehydrogenase nvfC then as a 3-OH dehydrogenase of asnovolin H to yield chemesin D. There are two branches to synthesize asnovolin A from chemesin D. In one branch, chemesin D undergoes Baeyer-Villiger oxidation by nvfH, methylation by nvfJ, and enoyl reduction by the nvfM D enoylreductase that reduces the double bond between C-5'and C-6', to form respectively asnovolin I, asnovolin K, and asnovolin A. In the other branch, the methylation precedes the Baeyer-Villiger oxidation and the enoyl reduction to yield asnovolin A via the asnovolin J intermediate. Asnovolin A is further converted to fumigatonoid A by the Fe(II)/2-oxoglutarate-dependent dioxygenase nvfI that catalyzes an endoperoxidation reaction. The alpha/beta hydrolase nvfD then acts as an epimerase that converts fumigatonoid A to its C-5' epimer, which then undergoes spontaneous or nvfD-catalyzed lactonization. The following step utilizes the ketoreductase nvfG to produce fumigatonoid B. The dioxygenase nvfE further converts fumigatonoid B into fumigatonoid C. Finally the Fe(II)/2-oxoglutarate-dependent dioxygenase nvfF catalyzes two rounds of oxidation to transform fumigatonoid C into the end product, novofumigatonin A. This is Asnovolin E/Chermesin D methyltransferase nvfJ from Aspergillus novofumigatus (strain IBT 16806).